We begin with the raw amino-acid sequence, 621 residues long: 1-deoxy-D-xylulose-5-phosphate synthase (621 aa).

Residues H76 and 117–119 (AHS) each bind thiamine diphosphate. A Mg(2+)-binding site is contributed by D148. Thiamine diphosphate-binding positions include 149–150 (GA), N178, Y285, and E367. N178 provides a ligand contact to Mg(2+).

Belongs to the transketolase family. DXPS subfamily. In terms of assembly, homodimer. Mg(2+) is required as a cofactor. Requires thiamine diphosphate as cofactor.

The catalysed reaction is D-glyceraldehyde 3-phosphate + pyruvate + H(+) = 1-deoxy-D-xylulose 5-phosphate + CO2. The protein operates within metabolic intermediate biosynthesis; 1-deoxy-D-xylulose 5-phosphate biosynthesis; 1-deoxy-D-xylulose 5-phosphate from D-glyceraldehyde 3-phosphate and pyruvate: step 1/1. In terms of biological role, catalyzes the acyloin condensation reaction between C atoms 2 and 3 of pyruvate and glyceraldehyde 3-phosphate to yield 1-deoxy-D-xylulose-5-phosphate (DXP). The protein is 1-deoxy-D-xylulose-5-phosphate synthase of Aromatoleum aromaticum (strain DSM 19018 / LMG 30748 / EbN1) (Azoarcus sp. (strain EbN1)).